A 277-amino-acid chain; its full sequence is Large ribosomal subunit protein uL2 (277 aa).

2 disordered regions span residues 28–55 (EPEK…RHRG) and 207–277 (KAGR…RTQG). 3 stretches are compositionally biased toward basic residues: residues 34–43 (THHKHSKQGR), 209–220 (GRTRHRGQRPHV), and 255–265 (LGRKTRNKKKR).

Belongs to the universal ribosomal protein uL2 family. Part of the 50S ribosomal subunit. Forms a bridge to the 30S subunit in the 70S ribosome.

One of the primary rRNA binding proteins. Required for association of the 30S and 50S subunits to form the 70S ribosome, for tRNA binding and peptide bond formation. It has been suggested to have peptidyltransferase activity; this is somewhat controversial. Makes several contacts with the 16S rRNA in the 70S ribosome. This Microcystis aeruginosa (strain NIES-843 / IAM M-2473) protein is Large ribosomal subunit protein uL2.